A 120-amino-acid polypeptide reads, in one-letter code: MHAPSEIRLTFNQDRPQSNEDDGSGLAVQEAKPILQAPPMYKVVLFNDDYTPMDFVVEVLETFFSLNRELATKIMLTVHTEGRAVCGLFTRDIAETKAMQVNQYARESQHPLLCEIEKDG.

Positions 1–27 (MHAPSEIRLTFNQDRPQSNEDDGSGLA) are disordered.

This sequence belongs to the ClpS family. Binds to the N-terminal domain of the chaperone ClpA.

Its function is as follows. Involved in the modulation of the specificity of the ClpAP-mediated ATP-dependent protein degradation. The protein is ATP-dependent Clp protease adapter protein ClpS of Pseudomonas putida (strain GB-1).